The chain runs to 580 residues: 2-hydroxyacyl-CoA lyase 1 (580 aa).

Glu-47 is a thiamine diphosphate binding site. A thiamine pyrophosphate binding region spans residues 413–494 (TMDIGRLCIP…FIVLNNNGVY (82 aa)). 2 residues coordinate Mg(2+): Asp-463 and Asn-490.

The protein belongs to the TPP enzyme family. In terms of assembly, homotetramer. Requires Mg(2+) as cofactor. Thiamine diphosphate is required as a cofactor.

It localises to the peroxisome. It catalyses the reaction a 2-hydroxy-3-methyl fatty acyl-CoA = a 2-methyl-branched fatty aldehyde + formyl-CoA. The catalysed reaction is an (R)-2-hydroxy-long-chain-fatty acyl-CoA = a long-chain fatty aldehyde + formyl-CoA. The enzyme catalyses 2-hydroxy-3-methylhexadecanoyl-CoA = 2-methylpentadecanal + formyl-CoA. It carries out the reaction 2-hydroxyoctadecanoyl-CoA = heptadecanal + formyl-CoA. Peroxisomal 2-OH acyl-CoA lyase involved in the cleavage (C1 removal) reaction in the fatty acid alpha-oxydation in a thiamine pyrophosphate (TPP)-dependent manner. Involved in the degradation of 3-methyl-branched fatty acids and the shortening of 2-hydroxy long-chain fatty acids. This chain is 2-hydroxyacyl-CoA lyase 1 (hacl1), found in Dictyostelium discoideum (Social amoeba).